The primary structure comprises 562 residues: MKKFGKALLALLVLLLLAAALFLYWPLTQRSVPAASNDKPVDVVLVGAGIMSITLATYLQELQPDWNIQVYERLDGVAGESSDGWNNAGTGHSAFAELNYTPELPDGSIETKRAVGIAESFEVSRQFWSHQVKEGRLSQPSDFINPTPHMSFVWGDDNIAYLHKRQQALVKNPLFYGMQYSEDPAQIKQWAPLLMEGRDPKQKVAATWMPLGTDVNFGVITRQLTAGLQRSPNFSLHLNHEVSALRQNADKSWNVTVKDLKAGTESTTHARFVFIGAGGAALKLLQMSGIPESKDYAGFPVGGQFLAFQGQDVTSRHGVKAYGMAETGSPPMSVPHLDARKLDGKPVVLFGPFALYSTKFLKHGSWWDLYSSVNHNNVGPMLEVGKDNLDLVQYLMGQARLNDADRQAELVKYFPTAKPGDWKLVTAGQRVQIIKRDPLKGPVLQFGTEIVTDKDHTLAALLGASPGASTSPPIMLDLMAKAFPDQMKAGWEARLREIVPSYGRKLNDSAALVNEIRTLTSQTLHLPYLEVPVDANAASPAAAAVPAAAKEKRNANEELQAL.

Belongs to the MQO family. Requires FAD as cofactor.

It carries out the reaction (S)-malate + a quinone = a quinol + oxaloacetate. It functions in the pathway carbohydrate metabolism; tricarboxylic acid cycle; oxaloacetate from (S)-malate (quinone route): step 1/1. The sequence is that of Probable malate:quinone oxidoreductase from Stenotrophomonas maltophilia (strain K279a).